The following is a 254-amino-acid chain: Type III pantothenate kinase (254 aa).

Residue 6 to 13 participates in ATP binding; that stretch reads DVGNSNIV. Substrate is bound by residues Y100 and 107–110; that span reads GADR. Residue D109 is the Proton acceptor of the active site. D129 provides a ligand contact to K(+). ATP is bound at residue T132. T184 serves as a coordination point for substrate.

It belongs to the type III pantothenate kinase family. In terms of assembly, homodimer. The cofactor is NH4(+). It depends on K(+) as a cofactor.

It is found in the cytoplasm. The catalysed reaction is (R)-pantothenate + ATP = (R)-4'-phosphopantothenate + ADP + H(+). It functions in the pathway cofactor biosynthesis; coenzyme A biosynthesis; CoA from (R)-pantothenate: step 1/5. In terms of biological role, catalyzes the phosphorylation of pantothenate (Pan), the first step in CoA biosynthesis. This chain is Type III pantothenate kinase, found in Geobacter sp. (strain M21).